Reading from the N-terminus, the 294-residue chain is Cell division protein FtsQ (294 aa).

Topologically, residues 1–26 (MARGPNRRRVDRVPGERRRRLARAMA) are cytoplasmic. The chain crosses the membrane as a helical span at residues 27-49 (LALPSILALAALGGAATLGWRVG). The Periplasmic portion of the chain corresponds to 50–294 (WKSDLLRVRE…GPQGRSSSLR (245 aa)). A POTRA domain is found at 55–123 (LRVREIRFEG…PALEVQLAER (69 aa)). The segment at 266–294 (AGRRGEPDGRSSYAAGGGGGPQGRSSSLR) is disordered.

The protein belongs to the FtsQ/DivIB family. FtsQ subfamily.

Its subcellular location is the cell inner membrane. Functionally, essential cell division protein. The protein is Cell division protein FtsQ of Anaeromyxobacter sp. (strain K).